Consider the following 300-residue polypeptide: Energy-coupling factor transporter ATP-binding protein EcfA2 (300 aa).

The ABC transporter domain maps to 3–258 (IKAKNIVKIY…NKFLIENKML (256 aa)). An ATP-binding site is contributed by 40–47 (GQTGSGKT).

This sequence belongs to the ABC transporter superfamily. Energy-coupling factor EcfA family. Forms a stable energy-coupling factor (ECF) transporter complex composed of 2 membrane-embedded substrate-binding proteins (S component), 2 ATP-binding proteins (A component) and 2 transmembrane proteins (T component).

The protein localises to the cell membrane. Its function is as follows. ATP-binding (A) component of a common energy-coupling factor (ECF) ABC-transporter complex. Unlike classic ABC transporters this ECF transporter provides the energy necessary to transport a number of different substrates. The protein is Energy-coupling factor transporter ATP-binding protein EcfA2 of Mesomycoplasma hyopneumoniae (strain 7448) (Mycoplasma hyopneumoniae).